The sequence spans 274 residues: Type III pantothenate kinase (274 aa).

Position 6 to 13 (6 to 13 (DVGNTNTV)) interacts with ATP. Residues tyrosine 110 and 117–120 (GADR) contribute to the substrate site. Aspartate 119 functions as the Proton acceptor in the catalytic mechanism. A K(+)-binding site is contributed by aspartate 139. Position 142 (threonine 142) interacts with ATP. Threonine 194 provides a ligand contact to substrate.

The protein belongs to the type III pantothenate kinase family. In terms of assembly, homodimer. Requires NH4(+) as cofactor. It depends on K(+) as a cofactor.

It localises to the cytoplasm. It catalyses the reaction (R)-pantothenate + ATP = (R)-4'-phosphopantothenate + ADP + H(+). It functions in the pathway cofactor biosynthesis; coenzyme A biosynthesis; CoA from (R)-pantothenate: step 1/5. Functionally, catalyzes the phosphorylation of pantothenate (Pan), the first step in CoA biosynthesis. This chain is Type III pantothenate kinase, found in Koribacter versatilis (strain Ellin345).